The sequence spans 204 residues: Tat proofreading chaperone DmsD (204 aa).

The protein belongs to the TorD/DmsD family. DmsD subfamily.

Required for biogenesis/assembly of DMSO reductase, but not for the interaction of the DmsA signal peptide with the Tat system. May be part of a chaperone cascade complex that facilitates a folding-maturation pathway for the substrate protein. The polypeptide is Tat proofreading chaperone DmsD (Escherichia coli O6:H1 (strain CFT073 / ATCC 700928 / UPEC)).